Here is a 620-residue protein sequence, read N- to C-terminus: Probable potassium transport system protein Kup 2 (620 aa).

Transmembrane regions (helical) follow at residues L10–L30, V50–I70, M102–I122, P136–I156, F168–I188, L211–Y231, W246–I266, M284–I304, I336–F356, I368–L388, M393–A413, and I415–V435.

Belongs to the HAK/KUP transporter (TC 2.A.72) family.

It localises to the cell inner membrane. The catalysed reaction is K(+)(in) + H(+)(in) = K(+)(out) + H(+)(out). Its function is as follows. Transport of potassium into the cell. Likely operates as a K(+):H(+) symporter. The protein is Probable potassium transport system protein Kup 2 of Rhodopseudomonas palustris (strain BisB5).